Reading from the N-terminus, the 187-residue chain is Elongation factor P (187 aa).

The protein belongs to the elongation factor P family.

It localises to the cytoplasm. Its pathway is protein biosynthesis; polypeptide chain elongation. Functionally, involved in peptide bond synthesis. Stimulates efficient translation and peptide-bond synthesis on native or reconstituted 70S ribosomes in vitro. Probably functions indirectly by altering the affinity of the ribosome for aminoacyl-tRNA, thus increasing their reactivity as acceptors for peptidyl transferase. The polypeptide is Elongation factor P (Parafrankia sp. (strain EAN1pec)).